We begin with the raw amino-acid sequence, 398 residues long: Streptopain (398 aa).

A signal peptide spans 1-27 (MNKKKLGIRLLSLLALGGFVLANPVFA). The propeptide occupies 28-145 (DQNFARNEKE…TTYAGTAEIK (118 aa)). The active-site Nucleophile is cysteine 192. Cysteine 192 carries the post-translational modification Cysteine methyl disulfide; in zymogen form. A protein is bound by residues serine 282 and glycine 339. Histidine 340 serves as the catalytic Proton acceptor. The interval 368–390 (RLDALNPSALGTGGGAGGFNGYQ) is C-terminal active site loop.

This sequence belongs to the peptidase C10 family. Monomer. The mature protease is derived from the precursor sequence by cleavage, either in cis via an autocatalytic mechanism, or in trans by mature SpeB or host proteases (trypsin, plasmin or subtilisin). Maturation can involve a number of protein cleavage intermediates. Mature SpeB probably plays the most important role in protein maturation in physiological conditions. In terms of processing, methylthiolation at Cys-192 of the inactive zymogen form is probably involved in the mechanism of secretion of the proteinase into the culture fluid.

Its subcellular location is the secreted. It is found in the host extracellular space. The protein localises to the host cytoplasm. It catalyses the reaction Preferential cleavage with hydrophobic residues at P2, P1 and P1'.. Its activity is regulated as follows. Synthesized as an inactive zymogen to protect the intracellular components of the bacteria from proteolytic activity during protein production. Once secreted into the extracellular milieu, cleaved into the active protease: maturation can be mediated in cis by autocatalytic cleavage, or in trans by mature SpeB or host proteases. Protease activity is strongly inhibited by zinc and copper, which prevent its maturation into an active protease: inhibition by metal ions may be required to prevent proteolysis of streptococcal proteins. Its function is as follows. Cysteine protease that acts as a key streptococcal virulence factor by cleaving host proteins involved in immune response. Triggers inflammation by mediating cleavage of host proteins, which can both promote host pathogenesis by triggering sterile inflammation and/or restrict streptococcal infection, depending on host immune statue and infection site. Cleaves host gasdermin-A (GSDMA) in epithelial cells, promoting GSDMA activation and formation of gasdermin pores, triggering pyroptosis. Pyroptosis triggers the elimination of the infected skin cell, depriving the pathogen of its protective niche, while inducing an inflammatory response. This ultimately prevents bacterial penetration of the epithelial barrier and a subsequent systemic dissemination of the pathogen. Also mediates cleavage of the cytokine precursor interleukin-1 beta (IL1B) to its mature form, resulting in inflammation and septic shock. SpeB-mediated maturation of IL1B plays a dual role depending on infection site: while IL1B inflammatory response prevents bacterial growth during invasive skin infections, it promotes streptococcal infection of the nasopharynx by disrupting colonization resistance mediated by the microbiota. Inhibits host autophagy be catalyzing cleavage and inactivation of key autophagy factors, such as CALCOCO2, NBR1 and SQSTM1. Cleaves and inhibits a number of complement factors, such as C2, C3-beta chain of C3, C4, C5 or SERPING1, thereby promoting evasion of host immunity. May also impair adaptive immunity by catalyzing cleavage and degradation of host immunoglobulins to promote immune system evasion; the relevance of this activity is however unsure in vivo. Catalyzes maturation and release of the peptide hormone bradykinin from the precursor Kininogen-1 (KNG1) to produce hypotension during septic shock. Also involved in bacterial translocation across the host epithelial barrier by mediating cleavage and degradation of host epithelial junction proteins, such as CDH1 and OCLN. Additionally, has been involved in degradation of fibronectin and vitronectin, two host extracellular matrix proteins involved in tissue integrity. Also able to catalyze cleavage and degradation of streptococcal proteins, such as C5a peptidase, EndoS or SmeZ. Degradation of streptococcal proteins is however strictly regulated to preserve integrity of other virulence factors. This Streptococcus pyogenes serotype M3 (strain ATCC BAA-595 / MGAS315) protein is Streptopain (speB).